The chain runs to 102 residues: uncharacterized protein (102 aa).

Residues 1-43 (MNNAHEENISSVTGFKSTSGSPAIGSSLPGRSGEGRSSSSSSG) are disordered. A compositionally biased stretch (polar residues) spans 9-21 (ISSVTGFKSTSGS). Residues 25 to 43 (GSSLPGRSGEGRSSSSSSG) show a composition bias toward low complexity.

This is an uncharacterized protein from Saccharomyces cerevisiae (strain ATCC 204508 / S288c) (Baker's yeast).